The chain runs to 234 residues: MAKTKAEHVHEVFESISDNYDKMNGVISFQMHIGWRNDTMKHMAVKPGSKALDVCCGTADWTIALAEAVGESGEVKGLDFSQNMLKVGEKKVQPYPQIELIHGNAMELPFPDDTFDYVTIGFGLRNVPDYLQVLKEMHRVVKPGGMVVCLETSQSEIPGYRQLFRFYFKYIMPIFGKIFAKSYKEYSWLQESANDFPGMKKLAALFEQAGLEKVTYKAYSGGAAAMHIGFKKIR.

Residues threonine 58, aspartate 79, and 104-105 contribute to the S-adenosyl-L-methionine site; that span reads NA.

Belongs to the class I-like SAM-binding methyltransferase superfamily. MenG/UbiE family.

The catalysed reaction is a 2-demethylmenaquinol + S-adenosyl-L-methionine = a menaquinol + S-adenosyl-L-homocysteine + H(+). Its pathway is quinol/quinone metabolism; menaquinone biosynthesis; menaquinol from 1,4-dihydroxy-2-naphthoate: step 2/2. Methyltransferase required for the conversion of demethylmenaquinol (DMKH2) to menaquinol (MKH2). The sequence is that of Demethylmenaquinone methyltransferase from Lysinibacillus sphaericus (strain C3-41).